We begin with the raw amino-acid sequence, 386 residues long: Citrate synthase (386 aa).

Residues His266 and Asp322 contribute to the active site.

Belongs to the citrate synthase family.

It carries out the reaction oxaloacetate + acetyl-CoA + H2O = citrate + CoA + H(+). The protein operates within carbohydrate metabolism; tricarboxylic acid cycle; isocitrate from oxaloacetate: step 1/2. The sequence is that of Citrate synthase (gltA) from Acidithiobacillus ferridurans.